A 693-amino-acid polypeptide reads, in one-letter code: Elongation factor G (693 aa).

The 275-residue stretch at 8 to 282 folds into the tr-type G domain; it reads EKTRNIGIMA…AVIDYLPSPL (275 aa). Residues 17 to 24, 81 to 85, and 135 to 138 each bind GTP; these read AHVDAGKT, DTPGH, and NKMD.

The protein belongs to the TRAFAC class translation factor GTPase superfamily. Classic translation factor GTPase family. EF-G/EF-2 subfamily.

It is found in the cytoplasm. Its function is as follows. Catalyzes the GTP-dependent ribosomal translocation step during translation elongation. During this step, the ribosome changes from the pre-translocational (PRE) to the post-translocational (POST) state as the newly formed A-site-bound peptidyl-tRNA and P-site-bound deacylated tRNA move to the P and E sites, respectively. Catalyzes the coordinated movement of the two tRNA molecules, the mRNA and conformational changes in the ribosome. The protein is Elongation factor G of Streptococcus pneumoniae (strain CGSP14).